Consider the following 304-residue polypeptide: Cell surface-binding protein OPG105 (304 aa).

The Alpha-carbonic anhydrase domain maps to 1–235; that stretch reads MPQQLSPINI…NDDTQVYYSG (235 aa). Residues 1–275 lie on the Virion surface side of the membrane; that stretch reads MPQQLSPINI…YQKYIEGNKT (275 aa). A helical transmembrane segment spans residues 276 to 294; it reads FAIIAIVFVFILTAILFLM. Residues 295-304 lie on the Intravirion side of the membrane; sequence SQRYSREKQN.

Belongs to the alpha-carbonic anhydrase family. Homodimer; disulfide-linked. Apparently non-glycosylated.

The protein localises to the virion membrane. Functionally, binds to chondroitin sulfate on the cell surface to provide virion attachment to target cell. The protein is Cell surface-binding protein OPG105 (OPG105) of Monkeypox virus (strain Zaire-96-I-16) (MPX).